The sequence spans 544 residues: E3 ubiquitin-protein ligase makorin-3 (544 aa).

2 disordered regions span residues 1–46 and 117–144; these read MEES…VSSA and DLSGRRRSRGGQDAQPRASADRGPKMAT. Composition is skewed to low complexity over residues 9–19 and 36–46; these read EAHAAAGAEAG and AAGASAGVSSA. C3H1-type zinc fingers lie at residues 92 to 119 and 274 to 301; these read WTKQILCRYYLHGQCKEGDNCRYSHDLS and PMPLPLCRYAARGQCLRGDRCAYPHGEI. A makorin-type Cys-His region spans residues 302–329; it reads CDMCGQQALHPWDAAQQEAHRRACVEAH. An RING-type zinc finger spans residues 347–401; the sequence is CGICMEVVYEKADPSDRRFGILFSCNHTYCLRCIRRWRSATQFENRISKSCPQCR. A C3H1-type 3 zinc finger spans residues 430–459; that stretch reads GMSQKACRYFAGGLGHCPFGEFCFYKHEYP.

In terms of tissue distribution, mainly expressed in mouse brain and reproductive system including testis and ovary. Ubiquitously detected at low levels throughout the entire embryo, but expression is highest in the ventricular layers of the brain.

Its subcellular location is the nucleus. The enzyme catalyses S-ubiquitinyl-[E2 ubiquitin-conjugating enzyme]-L-cysteine + [acceptor protein]-L-lysine = [E2 ubiquitin-conjugating enzyme]-L-cysteine + N(6)-ubiquitinyl-[acceptor protein]-L-lysine.. The protein operates within protein modification; protein ubiquitination. E3 ubiquitin ligase catalyzing the covalent attachment of ubiquitin moieties onto substrate proteins. Acts as a key developmental timer that helps ensure puberty begins at the appropriate age, by inhibiting premature activation of the reproductive hormone cascade. Epigenetically regulates GNRH1 transcription by disrupting the binding of methyl-DNA binding protein 3/MBD3 to the promoter of GNRH1. Mechanistically, mediates the non-proteolytic ubiquitination of MBD3 at multiple sites with 'Lys27' ubiquitin linkages and thereby regulates the methylation status of the genome, including GNRH1 promoter. Modulates the stability and translation of GNRH1 mRNA by mediating the non-proteolytic ubiquitination of PABP family members PABPC1, PABPC3 and PABPC4 at multiple sites. Also participates in the maintenance of genomic and epigenomic stability by regulating the abundance of APEX2 via 'Lys-48'-linked ubiquitination. The sequence is that of E3 ubiquitin-protein ligase makorin-3 (Mkrn3) from Mus musculus (Mouse).